Reading from the N-terminus, the 1446-residue chain is DNA-directed RNA polymerase subunit beta'' (1446 aa).

Zn(2+)-binding residues include C217, C285, C292, and C295.

The protein belongs to the RNA polymerase beta' chain family. RpoC2 subfamily. In terms of assembly, in plastids the minimal PEP RNA polymerase catalytic core is composed of four subunits: alpha, beta, beta', and beta''. When a (nuclear-encoded) sigma factor is associated with the core the holoenzyme is formed, which can initiate transcription. Zn(2+) is required as a cofactor.

The protein localises to the plastid. It is found in the chloroplast. It catalyses the reaction RNA(n) + a ribonucleoside 5'-triphosphate = RNA(n+1) + diphosphate. Functionally, DNA-dependent RNA polymerase catalyzes the transcription of DNA into RNA using the four ribonucleoside triphosphates as substrates. In Thalassiosira pseudonana (Marine diatom), this protein is DNA-directed RNA polymerase subunit beta''.